Here is a 509-residue protein sequence, read N- to C-terminus: Src substrate cortactin (509 aa).

Positions 1–28 (MWKASAGHAVSITQDDGGADDWETDPDF) are disordered. Residues 17–28 (GGADDWETDPDF) are compositionally biased toward acidic residues. Cortactin repeat units follow at residues 80–116 (ASHG…SQVD), 117–153 (SVRG…SQKD), 154–190 (YSSG…SQKD), 191–227 (YSKG…SQKD), and 228–264 (YVKG…SQKD). K87 and K107 each carry N6-acetyllysine. At S113 the chain carries Phosphoserine. Position 119 is an omega-N-methylarginine (R119). The residue at position 124 (K124) is an N6-acetyllysine. K144 carries the N6-acetyllysine; alternate modification. Residue K144 forms a Glycyl lysine isopeptide (Lys-Gly) (interchain with G-Cter in SUMO1); alternate linkage. Residue K144 forms a Glycyl lysine isopeptide (Lys-Gly) (interchain with G-Cter in SUMO2); alternate linkage. Phosphoserine is present on S150. 3 positions are modified to N6-acetyllysine: K152, K161, and K171. K181 is modified (N6-acetyllysine; alternate). Residue K181 forms a Glycyl lysine isopeptide (Lys-Gly) (interchain with G-Cter in SUMO1); alternate linkage. K181 participates in a covalent cross-link: Glycyl lysine isopeptide (Lys-Gly) (interchain with G-Cter in SUMO2); alternate. Residues K193 and K198 each carry the N6-acetyllysine modification. A Glycyl lysine isopeptide (Lys-Gly) (interchain with G-Cter in SUMO1) cross-link involves residue K218. Residue K235 is modified to N6-acetyllysine. S261 carries the post-translational modification Phosphoserine. The stretch at 265–287 (YAKGFGGKYGVQKDRMDKNASTF) is one Cortactin 6; truncated repeat. Residues K267, K272, K277, and K309 each carry the N6-acetyllysine modification. The stretch at 311–364 (SNIRANFENLAKEREQEDRRKAEAERAQRMAQERQEQEEARRKLEEQARAKKQT) forms a coiled coil. The disordered stretch occupies residues 318–409 (ENLAKEREQE…EPEPEYSTEA (92 aa)). Basic and acidic residues predominate over residues 320–359 (LAKEREQEDRRKAEAERAQRMAQERQEQEEARRKLEEQAR). T364 is modified (phosphothreonine). S368, S370, S380, and S381 each carry phosphoserine. Y384 is modified (phosphotyrosine; by FAK1). A compositionally biased stretch (low complexity) spans 393–406 (EPSYGSSEPEPEYS). Y405 is modified (phosphotyrosine). S406 is modified (phosphoserine). Residues Y429 and Y445 each carry the phosphotyrosine; by FAK1 modification. Phosphotyrosine; by SRC occurs at positions 445 and 448. The 59-residue stretch at 451 to 509 (DLGITAIALYDYQAAGDDEISFDPDDVITNIEMIDDGWWRGVCKGRYGLFPANYVELRQ) folds into the SH3 domain.

As to quaternary structure, part of a complex composed of NEDD9, AURKA and CTTN; within the complex NEDD9 acts as a scaffold protein and is required for complex formation. Interacts (via N-terminus) with NEDD9. Identified in a complex containing FGFR4, NCAM1, CDH2, PLCG1, FRS2, SRC, SHC1, GAP43 and CTTN. Forms a complex with ABL1 and MYLK. Interacts with SHANK2 and SHANK3 (via its SH3 domain). Interacts with PLXDC2 and SRCIN1. Interacts with SAMSN1 (via SH3 domain). Interacts (via SH3 domain) with ASAP1 (via Pro-rich region). Interacts with FER. Interacts with FGD1. Interacts with ABL2. Interacts with CTTNBP2NL; this interaction may target CTTN to stress fibers. Interacts with CTTNBP2; this interaction may target CTTN at the cell cortex or dendritic spines. Interacts (via SH3 domain) with DNM2. Interacts with ACTN1. Interacts with KCNA2 (via non-phosphorylated C-terminus). Interacts with PTK2/FAK1. Interacts with KCNH1. Interacts (via SH3 domain) with DIP2A (via N-terminus); the interaction enhances CTTN acetylation and is required for proper synaptic transmission. Interacts with XIRP1 (via N-terminus); the interaction promotes CTTN localization to intercalated disks in cardiomyocytes. Post-translationally, acetylated. In terms of processing, phosphorylated by FER. Phosphorylated in response to FGR activation. Phosphorylation by SRC promotes MYLK binding. Tyrosine phosphorylation in transformed cells may contribute to cellular growth regulation and transformation. Phosphorylated by PKN2 at both serine and threonine residues in a GTP-bound Rac1-dependent manner in hyaluronan-induced astrocytes and hence down-regulated CTTN ability to associate with filamentous actin. Phosphorylated on tyrosine residues in response to CHRM1 activation. Phosphorylated by PTK2/FAK1 in response to cell adhesion. In terms of tissue distribution, detected in liver (at protein level).

It is found in the cytoplasm. The protein localises to the cytoskeleton. Its subcellular location is the cell projection. The protein resides in the lamellipodium. It localises to the ruffle. It is found in the dendrite. The protein localises to the cell membrane. Its subcellular location is the podosome. The protein resides in the cell junction. It localises to the focal adhesion. It is found in the membrane. The protein localises to the clathrin-coated pit. Its subcellular location is the dendritic spine. The protein resides in the cell cortex. It localises to the endoplasmic reticulum. In terms of biological role, contributes to the organization of the actin cytoskeleton and cell shape. Plays a role in the formation of lamellipodia and in cell migration. Plays a role in the regulation of neuron morphology, axon growth and formation of neuronal growth cones. Through its interaction with CTTNBP2, involved in the regulation of neuronal spine density. Plays a role in focal adhesion assembly and turnover. In complex with ABL1 and MYLK regulates cortical actin-based cytoskeletal rearrangement critical to sphingosine 1-phosphate (S1P)-mediated endothelial cell (EC) barrier enhancement. Plays a role in intracellular protein transport and endocytosis, and in modulating the levels of potassium channels present at the cell membrane. Plays a role in receptor-mediated endocytosis via clathrin-coated pits. Required for stabilization of KCNH1 channels at the cell membrane. This chain is Src substrate cortactin, found in Rattus norvegicus (Rat).